We begin with the raw amino-acid sequence, 196 residues long: MVLKNAIALTGGIGTGKSTTIKILESQGYKILDADKIAHQLLQEHRFKIAQHFGSDILEKDILNRKKLGAIVFQDAHELKWLEDFLHPLIREHMLKKAYELEKNHQAYFLDIPLFFEVGGKKCYPVSKVVLVYASRALQIERLLERDKLKEAEILQRLACQMDIEQKRAMSDYIIDNSSSLKDLNKQVERFLKTLL.

The DPCK domain maps to 6 to 196; the sequence is AIALTGGIGT…QVERFLKTLL (191 aa). 14–19 contributes to the ATP binding site; the sequence is GTGKST.

It belongs to the CoaE family.

The protein localises to the cytoplasm. The catalysed reaction is 3'-dephospho-CoA + ATP = ADP + CoA + H(+). It participates in cofactor biosynthesis; coenzyme A biosynthesis; CoA from (R)-pantothenate: step 5/5. Functionally, catalyzes the phosphorylation of the 3'-hydroxyl group of dephosphocoenzyme A to form coenzyme A. The polypeptide is Dephospho-CoA kinase (Helicobacter pylori (strain ATCC 700392 / 26695) (Campylobacter pylori)).